A 717-amino-acid polypeptide reads, in one-letter code: F-box only protein 42 (717 aa).

The span at 1 to 30 (MASSSDSEDDSFMAVDQEETVLEGTMDQDE) shows a compositional bias: acidic residues. A disordered region spans residues 1-34 (MASSSDSEDDSFMAVDQEETVLEGTMDQDEEPHP). In terms of domain architecture, F-box spans 44 to 93 (NRSMSELPEEVLEYILSFLSPYQEHKTAALVCKQWYRLIKGVAHQCYHGF). Kelch repeat units lie at residues 132–184 (SMYV…VYKD), 186–242 (LVLF…VIDD), 244–293 (MIVF…VIDD), and 295–342 (TILI…LWCH). A disordered region spans residues 361-474 (RAPLSPSLNS…PSTPSAPEGY (114 aa)). Over residues 363–376 (PLSPSLNSRPSPIS) the composition is skewed to low complexity. Residues S365 and S373 each carry the phosphoserine modification. T378 carries the phosphothreonine modification. Polar residues-rich tracts occupy residues 416–426 (QRQTPSGSREG) and 455–469 (SLDS…STPS). S552 carries the phosphoserine modification. Low complexity predominate over residues 570 to 596 (GPSASAALSPPLGSSPGSPGSQSLSSG). Residues 570-631 (GPSASAALSP…GHHPPQSLNV (62 aa)) are disordered.

As to quaternary structure, component of some SCF complex, composed of CUL1, SKP1, RBX1 and FBXO42. Interacts (via the kelch domain) with p53/TP53; interaction is direct.

Its function is as follows. Substrate-recognition component of some SCF (SKP1-CUL1-F-box protein)-type E3 ubiquitin ligase complex. Specifically recognizes p53/TP53, promoting its ubiquitination and degradation. The protein is F-box only protein 42 (FBXO42) of Homo sapiens (Human).